A 417-amino-acid polypeptide reads, in one-letter code: Phosphoglycerate kinase 1 (417 aa).

An N-acetylserine modification is found at Ser-2. Residues Ser-2 and Ser-4 each carry the phosphoserine modification. The residue at position 6 (Lys-6) is an N6-succinyllysine. At Lys-11 the chain carries N6-acetyllysine. (2R)-3-phosphoglycerate contacts are provided by Val-23, Asp-24, Phe-25, Asn-26, Gln-38, and Arg-39. The interval Gln-38–Ala-43 is mitochondrial targeting region exposed following cis-trans isomerization by PIN1 and recognized by the TOM complex for mitochondrial translocation of the protein. The residue at position 48 (Lys-48) is an N6-acetyllysine; alternate. Lys-48 is subject to N6-succinyllysine; alternate. (2R)-3-phosphoglycerate contacts are provided by Ser-62, His-63, Gly-65, and Arg-66. Lys-75 is subject to N6-acetyllysine. Tyr-76 carries the post-translational modification Phosphotyrosine. 2 positions are modified to N6-acetyllysine: Lys-86 and Lys-91. An N6-acetyllysine; alternate modification is found at Lys-97. Lys-97 bears the N6-(2-hydroxyisobutyryl)lysine; alternate mark. Positions 122 and 123 each coordinate (2R)-3-phosphoglycerate. Lys-131 bears the N6-acetyllysine; alternate mark. Position 131 is an N6-malonyllysine; alternate (Lys-131). Residue Lys-146 is modified to N6-acetyllysine. (2R)-3-phosphoglycerate-binding residues include His-170 and Arg-171. The residue at position 191 (Lys-191) is an N6-succinyllysine. Tyr-196 is modified (phosphotyrosine). Lys-199 is subject to N6-acetyllysine. Ser-203 carries the post-translational modification Phosphoserine. Residue Gly-214 participates in ADP binding. Gly-214 lines the CDP pocket. Ala-215 and Lys-216 together coordinate AMP. Ala-215 lines the ATP pocket. Ala-215 serves as a coordination point for Mg(2+). Lys-216 carries the N6-(2-hydroxyisobutyryl)lysine modification. Mg(2+) contacts are provided by Ala-218 and Asp-219. Asp-219 contacts CDP. Residue Lys-220 participates in AMP binding. Residue Lys-220 coordinates ATP. Lys-220 carries the post-translational modification N6-(2-hydroxyisobutyryl)lysine. Position 238 (Gly-238) interacts with ADP. Residue Gly-238 coordinates CDP. Gly-239 is a binding site for AMP. Gly-239 lines the ATP pocket. N6-acetyllysine is present on residues Lys-267 and Lys-291. Residue Gly-313 coordinates AMP. Gly-313 provides a ligand contact to ATP. Lys-323 is modified (N6-(2-hydroxyisobutyryl)lysine). 3 residues coordinate CDP: Gly-338, Val-340, and Phe-343. Residue Phe-343 coordinates ADP. Position 344 (Glu-344) interacts with AMP. Glu-344 is an ATP binding site. Residue Lys-361 is modified to N6-acetyllysine. Residues Asp-375 and Thr-376 each coordinate ATP. Asp-375 contacts Mg(2+).

Belongs to the phosphoglycerate kinase family. As to quaternary structure, monomer. Interacts with kinase MAPK1/ERK2; the interaction is direct, occurs under hypoxic conditions, and promotes its interaction with PIN1. Interacts with peptidyl-prolyl cis-trans isomerase PIN1; the interaction is direct, occurs under hypoxic conditions, and targets the protein to the mitochondrion by promoting interactions with the TOM complex. Interacts with mitochondrial circRNA mcPGK1 (via its 2nd stem-loop); the interaction is direct and targets the protein to the mitochondrion by promoting interactions with the TOM complex. Interacts with pyruvate dehydrogenase kinase PDK1; the interaction is direct, occurs under hypoxic conditions and leads to PDK1-mediated inhibition of pyruvate dehydrogenase complex activity. It depends on Mg(2+) as a cofactor. Post-translationally, phosphorylated at Ser-203 by MAPK1/ERK2 under hypoxic conditions, which promotes its mitochondrial targeting.

It localises to the cytoplasm. The protein resides in the cytosol. The protein localises to the mitochondrion matrix. It catalyses the reaction (2R)-3-phosphoglycerate + ATP = (2R)-3-phospho-glyceroyl phosphate + ADP. The enzyme catalyses L-seryl-[protein] + ATP = O-phospho-L-seryl-[protein] + ADP + H(+). Its pathway is carbohydrate degradation; glycolysis; pyruvate from D-glyceraldehyde 3-phosphate: step 2/5. Catalyzes one of the two ATP producing reactions in the glycolytic pathway via the reversible conversion of 1,3-diphosphoglycerate to 3-phosphoglycerate. Both L- and D- forms of purine and pyrimidine nucleotides can be used as substrates, but the activity is much lower on pyrimidines. In addition to its role as a glycolytic enzyme, it seems that PGK-1 acts as a polymerase alpha cofactor protein (primer recognition protein). Acts as a protein kinase when localized to the mitochondrion where it phosphorylates pyruvate dehydrogenase kinase PDK1 to inhibit pyruvate dehydrogenase complex activity and suppress the formation of acetyl-coenzyme A from pyruvate, and consequently inhibit oxidative phosphorylation and promote glycolysis. May play a role in sperm motility. This chain is Phosphoglycerate kinase 1 (PGK1), found in Macaca fascicularis (Crab-eating macaque).